The chain runs to 149 residues: Lipoprotein signal peptidase (149 aa).

The next 2 membrane-spanning stretches (helical) occupy residues tryptophan 58–leucine 78 and alanine 85–methionine 105. Residues aspartate 111 and aspartate 127 contribute to the active site. A helical membrane pass occupies residues isoleucine 122–phenylalanine 142.

It belongs to the peptidase A8 family.

It is found in the cell membrane. The catalysed reaction is Release of signal peptides from bacterial membrane prolipoproteins. Hydrolyzes -Xaa-Yaa-Zaa-|-(S,diacylglyceryl)Cys-, in which Xaa is hydrophobic (preferably Leu), and Yaa (Ala or Ser) and Zaa (Gly or Ala) have small, neutral side chains.. It participates in protein modification; lipoprotein biosynthesis (signal peptide cleavage). Its function is as follows. This protein specifically catalyzes the removal of signal peptides from prolipoproteins. The chain is Lipoprotein signal peptidase from Brevibacillus brevis (strain 47 / JCM 6285 / NBRC 100599).